Consider the following 878-residue polypeptide: Splicing factor 3B subunit 2 (878 aa).

The segment covering 1 to 10 (MAAEHPEPPK) has biased composition (basic and acidic residues). Disordered regions lie at residues 1–25 (MAAEHPEPPKGELQLPPPPPPGHYG) and 67–136 (RPVL…LRVG). Residue K10 forms a Glycyl lysine isopeptide (Lys-Gly) (interchain with G-Cter in SUMO2) linkage. The SAP domain occupies 24-58 (YGAWAAQELQARLAEIGAPIQGSREELVERLQTYT). 2 stretches are compositionally biased toward pro residues: residues 91–114 (PMPPPPMGLPPLQPPPPPPPPPPG) and 122–133 (AHPPNLGPPPPL). A coiled-coil region spans residues 140–177 (ALSEEERLKLAQQQAALLMQQEERAKQAAVLMEQERQQ). Disordered regions lie at residues 183 to 356 (GTAV…EYVT) and 383 to 436 (KKEK…SKKK). Residues 201 to 221 (PLGPRVAAPVGPVVPTPTVLP) are compositionally biased toward low complexity. Omega-N-methylarginine is present on residues R205, R228, and R230. Over residues 224-237 (APVPRPRGPPPPPG) the composition is skewed to pro residues. N6-acetyllysine is present on K258. The segment covering 260 to 269 (LQLKESRQEE) has biased composition (basic and acidic residues). Residue K263 forms a Glycyl lysine isopeptide (Lys-Gly) (interchain with G-Cter in SUMO2) linkage. S272 carries the post-translational modification Phosphoserine. At T281 the chain carries Phosphothreonine. Phosphoserine is present on residues S290 and S292. Residue T294 is modified to Phosphothreonine. The residue at position 300 (S300) is a Phosphoserine. Residues 305-321 (EKNRKRRNRKKKKKPQR) show a composition bias toward basic residues. Residues 330–342 (SGDREKDSGRSRG) are compositionally biased toward basic and acidic residues. S343 carries the phosphoserine modification. Residues K383 and K395 each participate in a glycyl lysine isopeptide (Lys-Gly) (interchain with G-Cter in SUMO2) cross-link. 2 stretches are compositionally biased toward basic and acidic residues: residues 383-397 (KKEKEKEPEKLDKME) and 405-414 (KGFEEEHKDS). Residues 384–533 (KEKEKEPEKL…QEKEEQKTMK (150 aa)) are required for interaction with PRMT9. 3 positions are modified to phosphoserine: S414, S418, and S419. A Glycyl lysine isopeptide (Lys-Gly) (interchain with G-Cter in SUMO2) cross-link involves residue K475. R491 and R498 each carry omega-N-methylarginine. At R491 the chain carries Symmetric dimethylarginine. A Glycyl lysine isopeptide (Lys-Gly) (interchain with G-Cter in SUMO2) cross-link involves residue K526. A disordered region spans residues 674–740 (AAEFQTKTEE…PGGFSSVPAG (67 aa)). A compositionally biased stretch (acidic residues) spans 695–715 (EPSDEESSEEEEEEESDEDKP). K753 is covalently cross-linked (Glycyl lysine isopeptide (Lys-Gly) (interchain with G-Cter in SUMO2)). At T763 the chain carries Phosphothreonine. Residues K773, K826, and K840 each participate in a glycyl lysine isopeptide (Lys-Gly) (interchain with G-Cter in SUMO2) cross-link. Residues 827–852 (YEEHVREQQAQVEKEDFSDMVAEHAA) are compositionally biased toward basic and acidic residues. Residues 827 to 878 (YEEHVREQQAQVEKEDFSDMVAEHAAKQKQKKRKAQPQDSRGGSKKYKEFKF) are disordered. S844 carries the post-translational modification Phosphoserine.

Component of the 17S U2 SnRNP complex, a ribonucleoprotein complex that contains small nuclear RNA (snRNA) U2 and a number of specific proteins. Part of the SF3B subcomplex of the 17S U2 SnRNP complex. SF3B associates with the splicing subcomplex SF3A and a 12S RNA unit to form the U2 small nuclear ribonucleoproteins complex (U2 snRNP). Within the SF3B complex, interacts directly with SF3B4. Found in a complex with PRMT9, SF3B2 and SF3B4. Interacts (Arg-491-methylated form) with SMN1 (via Tudor domain). Interacts with RBM7. Interacts with ERCC6. Component of the minor spliceosome. Within this complex, interacts with SCNM1 and CRIPT. Post-translationally, methylation at Arg-491 by PRMT9 is required for the interaction with SMN1.

The protein resides in the nucleus. It is found in the nucleus speckle. Component of the 17S U2 SnRNP complex of the spliceosome, a large ribonucleoprotein complex that removes introns from transcribed pre-mRNAs. The 17S U2 SnRNP complex (1) directly participates in early spliceosome assembly and (2) mediates recognition of the intron branch site during pre-mRNA splicing by promoting the selection of the pre-mRNA branch-site adenosine, the nucleophile for the first step of splicing. Within the 17S U2 SnRNP complex, SF3B2 is part of the SF3B subcomplex, which is required for 'A' complex assembly formed by the stable binding of U2 snRNP to the branchpoint sequence in pre-mRNA. Sequence independent binding of SF3A and SF3B subcomplexes upstream of the branch site is essential, it may anchor U2 snRNP to the pre-mRNA. May also be involved in the assembly of the 'E' complex. Also acts as a component of the minor spliceosome, which is involved in the splicing of U12-type introns in pre-mRNAs. The protein is Splicing factor 3B subunit 2 of Mus musculus (Mouse).